The following is a 63-amino-acid chain: MNYTDLKDKNLNELQVLLKEKKVLLFELKAKLKTMQLTNTSELRATKKDIAKIQTALTAVKAN.

This sequence belongs to the universal ribosomal protein uL29 family.

The chain is Large ribosomal subunit protein uL29 from Aliarcobacter butzleri (strain RM4018) (Arcobacter butzleri).